Here is an 800-residue protein sequence, read N- to C-terminus: Fibroblast growth factor receptor 3 (800 aa).

Positions 1–20 (MVPLCLLLYLATLVFPPVYS) are cleaved as a signal peptide. The region spanning 21–122 (AHLLSPEPTD…YTVKVIDSLS (102 aa)) is the Ig-like C2-type 1 domain. The Extracellular portion of the chain corresponds to 21-363 (AHLLSPEPTD…EMEREDDYAD (343 aa)). A disulfide bridge connects residues Cys55 and Cys101. N-linked (GlcNAc...) asparagine glycosylation is found at Asn77, Asn90, and Asn112. Acidic residues predominate over residues 124–136 (GDDEDYDEDEDEA). Residues 124–143 (GDDEDYDEDEDEAGNGNAEA) are disordered. Ig-like C2-type domains are found at residues 144-237 (PYWT…YQLD) and 246-348 (PILQ…AWLT). A disulfide bond links Cys169 and Cys221. Asn218, Asn255, Asn287, Asn308, and Asn321 each carry an N-linked (GlcNAc...) asparagine glycan. Residues Cys268 and Cys332 are joined by a disulfide bond. Residues 364–384 (ILIYVTSCVLFILTMVIIILC) form a helical membrane-spanning segment. The Cytoplasmic portion of the chain corresponds to 385-800 (RMWINTQKTL…HHHSNGVIRT (416 aa)). A Protein kinase domain is found at 460 to 739 (LTLGKPLGEG…RQLVEDHDRV (280 aa)). ATP is bound by residues 466–474 (LGEGCFGQV) and Lys496. Asp605 acts as the Proton acceptor in catalysis. Residues Tyr635, Tyr636, Tyr712, and Tyr748 each carry the phosphotyrosine; by autocatalysis modification. A compositionally biased stretch (polar residues) spans 764–773 (DSNSTCSSGD). Positions 764–800 (DSNSTCSSGDDSVFAHDPLPEEPCLPKHHHSNGVIRT) are disordered.

This sequence belongs to the protein kinase superfamily. Tyr protein kinase family. Fibroblast growth factor receptor subfamily. In terms of assembly, monomer. Homodimer after ligand binding. Post-translationally, autophosphorylated. Binding of FGF family members together with heparan sulfate proteoglycan or heparin promotes receptor dimerization and autophosphorylation on tyrosine residues. Autophosphorylation occurs in trans between the two FGFR molecules present in the dimer.

The protein resides in the cell membrane. It carries out the reaction L-tyrosyl-[protein] + ATP = O-phospho-L-tyrosyl-[protein] + ADP + H(+). With respect to regulation, present in an inactive conformation in the absence of bound ligand. Ligand binding leads to dimerization and activation by autophosphorylation on tyrosine residues. In terms of biological role, tyrosine-protein kinase that acts as a cell-surface receptor for fibroblast growth factors and plays an essential role in the regulation of cell proliferation, differentiation and apoptosis. Plays an essential role in the regulation of chondrocyte differentiation, proliferation and apoptosis, and is required for normal skeleton development. Regulates both osteogenesis and postnatal bone mineralization by osteoblasts. Promotes apoptosis in chondrocytes, but can also promote cancer cell proliferation. Phosphorylates PLCG1, CBL and FRS2. Ligand binding leads to the activation of several signaling cascades. Activation of PLCG1 leads to the production of the cellular signaling molecules diacylglycerol and inositol 1,4,5-trisphosphate. Phosphorylation of FRS2 triggers recruitment of GRB2, GAB1, PIK3R1 and SOS1, and mediates activation of RAS, MAPK1/ERK2, MAPK3/ERK1 and the MAP kinase signaling pathway, as well as of the AKT1 signaling pathway. The polypeptide is Fibroblast growth factor receptor 3 (fgfr3) (Danio rerio (Zebrafish)).